A 142-amino-acid polypeptide reads, in one-letter code: Large ribosomal subunit protein uL13 (142 aa).

It belongs to the universal ribosomal protein uL13 family. As to quaternary structure, part of the 50S ribosomal subunit.

This protein is one of the early assembly proteins of the 50S ribosomal subunit, although it is not seen to bind rRNA by itself. It is important during the early stages of 50S assembly. This chain is Large ribosomal subunit protein uL13, found in Pseudoalteromonas atlantica (strain T6c / ATCC BAA-1087).